Here is a 582-residue protein sequence, read N- to C-terminus: ATP-dependent lipid A-core flippase (582 aa).

5 helical membrane-spanning segments follow: residues 27-47 (LIVA…MISL), 69-89 (LIIF…TYCL), 142-162 (ALVS…LMFY), 165-185 (WQLS…IGVV), and 249-269 (AAAN…VLYL). The ABC transmembrane type-1 domain maps to 28-310 (IVAVIALVIN…LTNVTSQFQR (283 aa)). Positions 342 to 578 (VSVKDVSFTY…NGAYAQLHRI (237 aa)) constitute an ABC transporter domain. 376–383 (GRSGSGKS) provides a ligand contact to ATP.

The protein belongs to the ABC transporter superfamily. Lipid exporter (TC 3.A.1.106) family. Homodimer.

It localises to the cell inner membrane. The catalysed reaction is ATP + H2O + lipid A-core oligosaccharideSide 1 = ADP + phosphate + lipid A-core oligosaccharideSide 2.. In terms of biological role, involved in lipopolysaccharide (LPS) biosynthesis. Translocates lipid A-core from the inner to the outer leaflet of the inner membrane. Transmembrane domains (TMD) form a pore in the inner membrane and the ATP-binding domain (NBD) is responsible for energy generation. The protein is ATP-dependent lipid A-core flippase of Vibrio parahaemolyticus serotype O3:K6 (strain RIMD 2210633).